We begin with the raw amino-acid sequence, 236 residues long: Peptidyl-prolyl cis-trans isomerase CYP21-4 (236 aa).

Residues 22-42 traverse the membrane as a helical; Signal-anchor for type II membrane protein segment; the sequence is ISISTIIVCNLVVAVVILSLV. The disordered stretch occupies residues 52-71; it reads SRNTIEHETRSQRFEDTNTA. Residues 54 to 67 are compositionally biased toward basic and acidic residues; the sequence is NTIEHETRSQRFED. The PPIase cyclophilin-type domain maps to 82-232; the sequence is FADINTSKGL…SPIGITGVVL (151 aa). Residue asparagine 86 is glycosylated (N-linked (GlcNAc...) asparagine).

Belongs to the cyclophilin-type PPIase family. Ubiquitous.

Its subcellular location is the membrane. It carries out the reaction [protein]-peptidylproline (omega=180) = [protein]-peptidylproline (omega=0). PPIases accelerate the folding of proteins. It catalyzes the cis-trans isomerization of proline imidic peptide bonds in oligopeptides. This is Peptidyl-prolyl cis-trans isomerase CYP21-4 (CYP21-4) from Arabidopsis thaliana (Mouse-ear cress).